The primary structure comprises 556 residues: MTAPIWMASPPEVHSALLSSGPGPGPLLVSAEGWHSLSIAYAETADELAALLAAVQAGTWDGPTAAVYVAAHTPYLAWLVQASANSAAMATRQETAATAYGTALAAMPTLAELGANHALHGVLMATNFFGINTIPIALNESDYARMWIQAATTMASYQAVSTAAVAAAPQTTPAPQIVKANAPTAASDEPNQVQEWLQWLQKIGYTDFYNNVIQPFINWLTNLPFLQAMFSGFDPWLPSLGNPLTFLSPANIAFALGYPMDIGSYVAFLSQTFAFIGADLAAAFASGNPATIAFTLMFTTVEAIGTIITDTIALVKTLLEQTLALLPAALPLLAAPLAPLTLAPASAAGGFAGLSGLAGLVGIPPSAPPVIPPVAAIAPSIPTPTPTPAPAPAPTAVTAPTPPPGPPPPPVTAPPPVTGAGIQSFGYLVGDLNSAAQARKAVGTGVRKKTPEPDSAEAPAAAAAPEEQVQPQRRRRPKIKQLGRGYEYLDLDPETGHDPTGSPQGAGTLGFAGTTHKASPGQVAGLITLPNDAFGGSPRTPMMPGTWDTDSATRVE.

The interval 8-164 (ASPPEVHSAL…ASYQAVSTAA (157 aa)) is PPE. An SH3-like region spans residues 201-256 (QKIGYTDFYNNVIQPFINWLTNLPFLQAMFSGFDPWLPSLGNPLTFLSPANIAFAL). The tract at residues 319 to 340 (LEQTLALLPAALPLLAAPLAPL) is leucine zipper motif. 2 disordered regions span residues 385–418 (TPTP…PPVT) and 443–556 (GTGV…TRVE). Positions 400 to 417 (PTPPPGPPPPPVTAPPPV) are enriched in pro residues. The span at 456 to 471 (AEAPAAAAAPEEQVQP) shows a compositional bias: low complexity. Residues 472 to 481 (QRRRRPKIKQ) show a composition bias toward basic residues. The short motif at 473–481 (RRRRPKIKQ) is the Nuclear localization signal element.

It belongs to the mycobacterial PPE family.

The protein resides in the secreted. Its subcellular location is the host cytoplasm. It is found in the host nucleus. Inhibits nitric oxide (NO) production in activated macrophages. Acts by inhibiting expression of the host inducible nitric oxide synthase (iNOS). PPE2 is translocated into the host macrophage nucleus, where it interacts with a GATA-binding site overlapping with the TATA box of NOS2 (iNOS) promoter, and strongly inhibits NOS2 gene transcription. Reduction in NO production in turn facilitates intracellular survival of the bacilli inside the macrophage. In addition, disrupts the assembly of NADPH oxidase complex, which inhibits NADPH oxidase-mediated reactive oxygen species (ROS) generation in macrophages and favors M.tuberculosis survival. Acts by interacting with NCF2, the cytosolic subunit of NADPH oxidase, and preventing translocation of NCF2 and NCF1 to the membrane, which causes a reduction of the functional assembly of NADPH oxidase complex and a decrease in NADPH oxidase activity. The polypeptide is PPE family protein PPE2 (PPE2) (Mycobacterium tuberculosis (strain ATCC 25618 / H37Rv)).